The sequence spans 116 residues: Transcriptional regulator WhiB4 (116 aa).

The 57-residue stretch at 36–92 (LCRATDPDELFVRGAAQRKAAVICRHCPVMQECGADALDNKVEFGVWGGMTERQRRA) folds into the 4Fe-4S Wbl-type domain. Residues cysteine 37, cysteine 59, cysteine 62, and cysteine 68 each contribute to the [4Fe-4S] cluster site.

The protein belongs to the WhiB family. The cofactor is [4Fe-4S] cluster. Post-translationally, the Fe-S cluster can be nitrosylated by nitric oxide (NO). Upon Fe-S cluster removal intramolecular disulfide bonds are formed.

The protein resides in the cytoplasm. In terms of biological role, acts as a transcriptional regulator. Probably redox-responsive. The apo- but not holo-form probably binds DNA. Plays a role in lipooligosaccharide (LOS) biosynthesis by regulating LOS gene expression. The protein is Transcriptional regulator WhiB4 (whiB4) of Mycobacterium marinum (strain ATCC BAA-535 / M).